The chain runs to 406 residues: Bifunctional enzyme IspD/IspF (406 aa).

The 2-C-methyl-D-erythritol 4-phosphate cytidylyltransferase stretch occupies residues 1–247 (MSLIRVNGEA…AFFFNPAKDT (247 aa)). Residues 248-406 (FIGMGFDTHA…HVSMRYKQKL (159 aa)) are 2-C-methyl-D-erythritol 2,4-cyclodiphosphate synthase. A divalent metal cation contacts are provided by aspartate 254 and histidine 256. 4-CDP-2-C-methyl-D-erythritol 2-phosphate-binding positions include 254–256 (DTH) and 280–281 (HS). Histidine 288 contributes to the a divalent metal cation binding site. 4-CDP-2-C-methyl-D-erythritol 2-phosphate contacts are provided by residues 302 to 304 (DIG), 307 to 311 (FPDND), 378 to 381 (TTME), phenylalanine 385, and lysine 388.

It in the N-terminal section; belongs to the IspD/TarI cytidylyltransferase family. IspD subfamily. The protein in the C-terminal section; belongs to the IspF family. The cofactor is a divalent metal cation.

It carries out the reaction 2-C-methyl-D-erythritol 4-phosphate + CTP + H(+) = 4-CDP-2-C-methyl-D-erythritol + diphosphate. The catalysed reaction is 4-CDP-2-C-methyl-D-erythritol 2-phosphate = 2-C-methyl-D-erythritol 2,4-cyclic diphosphate + CMP. It functions in the pathway isoprenoid biosynthesis; isopentenyl diphosphate biosynthesis via DXP pathway; isopentenyl diphosphate from 1-deoxy-D-xylulose 5-phosphate: step 2/6. It participates in isoprenoid biosynthesis; isopentenyl diphosphate biosynthesis via DXP pathway; isopentenyl diphosphate from 1-deoxy-D-xylulose 5-phosphate: step 4/6. Functionally, bifunctional enzyme that catalyzes the formation of 4-diphosphocytidyl-2-C-methyl-D-erythritol from CTP and 2-C-methyl-D-erythritol 4-phosphate (MEP) (IspD), and catalyzes the conversion of 4-diphosphocytidyl-2-C-methyl-D-erythritol 2-phosphate (CDP-ME2P) to 2-C-methyl-D-erythritol 2,4-cyclodiphosphate (ME-CPP) with a corresponding release of cytidine 5-monophosphate (CMP) (IspF). This Helicobacter pylori (strain HPAG1) protein is Bifunctional enzyme IspD/IspF.